The chain runs to 149 residues: Ribosome maturation factor RimP (149 aa).

The protein belongs to the RimP family.

It is found in the cytoplasm. In terms of biological role, required for maturation of 30S ribosomal subunits. This Sulfurimonas denitrificans (strain ATCC 33889 / DSM 1251) (Thiomicrospira denitrificans (strain ATCC 33889 / DSM 1251)) protein is Ribosome maturation factor RimP.